The chain runs to 607 residues: Fatty acid amide hydrolase (607 aa).

Residues lysine 205 and serine 281 each act as charge relay system in the active site. 302-305 (GGGS) provides a ligand contact to substrate. The active-site Acyl-ester intermediate is serine 305.

This sequence belongs to the amidase family. In terms of assembly, forms homodimers. As to expression, expressed in roots, leaves and flowers. Expressed in seedlings, flowers, roots, siliques, seeds and leaves.

The protein resides in the endoplasmic reticulum membrane. Its subcellular location is the cell membrane. It catalyses the reaction N-(5Z,8Z,11Z,14Z-eicosatetraenoyl)-ethanolamine + H2O = ethanolamine + (5Z,8Z,11Z,14Z)-eicosatetraenoate. The enzyme catalyses N-(9Z,12Z-octadecadienoyl)-ethanolamine + H2O = ethanolamine + (9Z,12Z)-octadecadienoate. The catalysed reaction is N-hexadecanoylethanolamine + H2O = ethanolamine + hexadecanoate. It carries out the reaction N-tetradecanoylethanolamine + H2O = tetradecanoate + ethanolamine. It catalyses the reaction N-dodecanoylethanolamine + H2O = dodecanoate + ethanolamine. With respect to regulation, inhibited by methyl arachidonyl fluorophosphonate (MAFP). Functionally, catalyzes the hydrolysis of bioactive endogenous fatty acid amides to their corresponding acids. The hydrolysis of endogenous amidated lipids terminates their participation as lipid mediators in various signaling systems. Converts a wide range of N-acylethanolamines (NAEs) to their corresponding free fatty acids and ethanolamine. Can use oleamide as substrate, but not indole-3-acetamide, 1-naphtalene-acetamide, nicotinic acid amide or L-asparagine. Can use 2-arachidonylglycerol as substrate. Participates in the regulation of plant growth. Hydrolyzes N-dodecanoylethanolamine, which is has a growth inhibitory effect on seedling growth. Involved in plant defense signaling. Involved in abscisic acid (ABA) signaling through mechanisms that are independent of the catalytic activity. Involved in the regulation of flowering time. Catalyzes the hydrolysis of N-acyl L-homoserine lactones (AHLs), which are a class of signaling molecules produced by bacteria for quorum sensing. Accumulation of L-homoserine appears to encourage plant growth at low concentrations by stimulating transpiration, but higher concentrations inhibit growth by stimulating ethylene production. The sequence is that of Fatty acid amide hydrolase from Arabidopsis thaliana (Mouse-ear cress).